A 234-amino-acid polypeptide reads, in one-letter code: HTH-type transcriptional regulator SmoD (234 aa).

Residues 8 to 76 (LPMYMQIAEM…QGSGNYIRAV (69 aa)) enclose the HTH gntR-type domain. Positions 36–55 (ERDMAADLGIAVGTLRKSLA) form a DNA-binding region, H-T-H motif.

The protein localises to the cytoplasm. Its function is as follows. Probably regulates expression of genes involved in the sulfoquinovose monooxygenase (sulfo-SMO) pathway (smoABCDEFGHI). This is HTH-type transcriptional regulator SmoD from Agrobacterium fabrum (strain C58 / ATCC 33970) (Agrobacterium tumefaciens (strain C58)).